The sequence spans 99 residues: UPF0386 protein mll0189 (99 aa).

It belongs to the UPF0386 family.

The polypeptide is UPF0386 protein mll0189 (Mesorhizobium japonicum (strain LMG 29417 / CECT 9101 / MAFF 303099) (Mesorhizobium loti (strain MAFF 303099))).